The sequence spans 117 residues: MLLLLYICCLFLKFILANVDLTFVEYAKLPSKYAELLANATNQQGVMLFSTGDIRIGAYNYLVNNVTEINNDTDAYLCQLLTGQYTTDCYIFDTNSDDKPETFNSSIHLLNSDLDPK.

Residues 1–17 (MLLLLYICCLFLKFILA) form the signal peptide. Asn-39, Asn-65, Asn-71, and Asn-104 each carry an N-linked (GlcNAc...) asparagine glycan.

This sequence belongs to the UPF0321 family.

The polypeptide is UPF0321 protein PJ695.01c (Schizosaccharomyces pombe (strain 972 / ATCC 24843) (Fission yeast)).